A 334-amino-acid polypeptide reads, in one-letter code: Ornithine carbamoyltransferase, catabolic (334 aa).

Carbamoyl phosphate-binding positions include 57-60 (STRT), Gln84, Arg108, and 135-138 (HPTQ). L-ornithine contacts are provided by residues Asn168, Asp232, and 236 to 237 (SM). Carbamoyl phosphate is bound by residues 274–275 (CL) and Arg321.

This sequence belongs to the aspartate/ornithine carbamoyltransferase superfamily. OTCase family.

The protein resides in the cytoplasm. The enzyme catalyses carbamoyl phosphate + L-ornithine = L-citrulline + phosphate + H(+). It participates in amino-acid degradation; L-arginine degradation via ADI pathway; carbamoyl phosphate from L-arginine: step 2/2. Reversibly catalyzes the transfer of the carbamoyl group from carbamoyl phosphate (CP) to the N(epsilon) atom of ornithine (ORN) to produce L-citrulline. This chain is Ornithine carbamoyltransferase, catabolic (arcB), found in Haemophilus influenzae (strain ATCC 51907 / DSM 11121 / KW20 / Rd).